Here is a 100-residue protein sequence, read N- to C-terminus: uncharacterized protein (100 aa).

An N-terminal signal peptide occupies residues Met-1 to Gly-17. Residue Cys-18 is the site of N-palmitoyl cysteine attachment. Cys-18 carries the S-diacylglycerol cysteine lipid modification.

Its subcellular location is the cell membrane. This is an uncharacterized protein from Salmonella choleraesuis (strain SC-B67).